The chain runs to 1032 residues: Argonaute protein hrde-1 (1032 aa).

Disordered stretches follow at residues 1–51 (MADL…PIGR) and 298–375 (KLSE…YSPS). Positions 1-551 (MADLLDKIMG…IQMTAKLLPP (551 aa)) are required to recruit the small-RNA amplification machinery to gene targets and promote gene silencing. Residues 18–33 (PKRDNRMNQDKDEPTS) show a composition bias toward basic and acidic residues. The span at 303 to 313 (KGGGGGRGGYG) shows a compositional bias: gly residues. Composition is skewed to basic and acidic residues over residues 315–335 (SDSRDSRGGYRGGRSDSRDFR) and 343–364 (GNDRYRDESRGRRDMYDSRRDS). The PAZ domain occupies 376-481 (DAAELEHAFG…FPMELLRIAP (106 aa)). The region spanning 650 to 977 (DILVGIAREK…LAKRGRNNYK (328 aa)) is the Piwi domain.

This sequence belongs to the argonaute family. WAGO subfamily. As to expression, expressed in the nuclei of male and female germ cells.

It is found in the cytoplasm. It localises to the cytoplasmic ribonucleoprotein granule. The protein resides in the nucleus. In terms of biological role, argonaute protein which is involved in the endogenous small interfering RNA (endo-siRNA) pathway and is required for RNA-mediated gene silencing (RNAi) in the germline. Interacts with secondary 22G-RNAs in an hrde-2-dependent manner; 22G-RNAs are RNA-dependent RNA polymerase-derived endo-siRNAs, typically 22 nucleotides in length with a 5'-guanosine residue. Plays a key role in transgenerational epigenetic inheritance and germline immortality. May be involved in transgenerational gene silencing both by inducing subnuclear-co-localization of target genes into heterochromatin and by activation of small RNA amplification in the nuage. This chain is Argonaute protein hrde-1, found in Caenorhabditis elegans.